The following is a 335-amino-acid chain: DNA-directed RNA polymerase subunit alpha (335 aa).

Residues 1-233 (MQRNWRELIK…DQLTIFINFE (233 aa)) are alpha N-terminal domain (alpha-NTD). Residues 249–335 (FNDHLFRSVD…DIENRRKEQE (87 aa)) form an alpha C-terminal domain (alpha-CTD) region.

It belongs to the RNA polymerase alpha chain family. In terms of assembly, homodimer. The RNAP catalytic core consists of 2 alpha, 1 beta, 1 beta' and 1 omega subunit. When a sigma factor is associated with the core the holoenzyme is formed, which can initiate transcription.

The enzyme catalyses RNA(n) + a ribonucleoside 5'-triphosphate = RNA(n+1) + diphosphate. In terms of biological role, DNA-dependent RNA polymerase catalyzes the transcription of DNA into RNA using the four ribonucleoside triphosphates as substrates. The polypeptide is DNA-directed RNA polymerase subunit alpha (Syntrophobacter fumaroxidans (strain DSM 10017 / MPOB)).